A 334-amino-acid chain; its full sequence is MSDAPAVEFRSVSKVFRTGKREHTVLHEIDLRIERGEILGVIGYSGAGKSTLARLINGLEKPTAGTIEVAGTPITGVPEARVRQLRRDIGMIFQQFNLFRSRTAAGNIEYPLKVAGWPRAKRKARVAELLEFVGLTDKARSYPDQLSGGQKQRVGIARALATSPALLLADEATSALDPETTGEVLALLRKINTELGVTIVVITHEMDVIRAVADRVAVLADGRIVELASTFDVFAAPRSAPARAFVDTVLHNRPAPEELRRLDALHTGRLVTVDVDDKRGIGAALTTAARAGVRFEVVYGGVSTLQDKTFGSITLALDGPDDAVAAVLAALDER.

An ABC transporter domain is found at 7–246; that stretch reads VEFRSVSKVF…PRSAPARAFV (240 aa). Residue 43-50 participates in ATP binding; the sequence is GYSGAGKS.

This sequence belongs to the ABC transporter superfamily. Methionine importer (TC 3.A.1.24) family. As to quaternary structure, the complex is composed of two ATP-binding proteins (MetN), two transmembrane proteins (MetI) and a solute-binding protein (MetQ).

The protein resides in the cell membrane. The enzyme catalyses L-methionine(out) + ATP + H2O = L-methionine(in) + ADP + phosphate + H(+). The catalysed reaction is D-methionine(out) + ATP + H2O = D-methionine(in) + ADP + phosphate + H(+). Its function is as follows. Part of the ABC transporter complex MetNIQ involved in methionine import. Responsible for energy coupling to the transport system. The protein is Methionine import ATP-binding protein MetN of Nocardia farcinica (strain IFM 10152).